Reading from the N-terminus, the 488-residue chain is RNA binding exosome specificity factor Mmi1 (488 aa).

Composition is skewed to polar residues over residues 1-14 (MSNT…SSKS), 33-47 (LNES…TTHT), and 54-66 (SVLS…NFSS). Disordered regions lie at residues 1–20 (MSNT…ELPN) and 25–80 (RSLW…DAPI). Over residues 71-80 (PAPESHDAPI) the composition is skewed to basic and acidic residues. The tract at residues 95–122 (GKYDFSRHCTDYGHSYEWPYFRSLRRES) is interaction with erh1. 2 disordered regions span residues 163–185 (SRLH…RRLA) and 225–261 (SYPV…TRAS). A Phosphothreonine modification is found at T176. Phosphoserine is present on residues S178, S230, S231, S261, S263, and S265. Positions 289-299 (SYLLSNSSNDS) are enriched in low complexity. Residues 289–328 (SYLLSNSSNDSASRKEKPKARASTPPPLNFSRASEHRNEK) are disordered. S311 is subject to Phosphoserine. Residue T312 is modified to Phosphothreonine. Residues 350 to 476 (SRYFIMLCDN…DEGSRLCTLI (127 aa)) enclose the YTH domain.

As to quaternary structure, component of the erh1-mmi1 complex composed of mmi1 and erh1. Interacts (via N-terminus) with erh1 in a 2:2 stoichiometry. Interacts with rrp6.

The protein resides in the nucleus. Its function is as follows. RNA-binding protein that recognizes and binds N6-methyladenosine (m6A)-containing RNAs, a modification present at internal sites of mRNAs and some non-coding RNAs. Functions alone and as part of the erh1-mmi1 complex, to recruit the CCR4-NOT complex and the NURS complex to target RNAs. Suppresses the meiotic program during vegetative growth and promotes the meiotic program during mating. Binds to DSR (determinant of selective removal) regions in meiotic mRNA, and recruits the NURS complex to targets. Recruitment of NURS complex to target mRNAs promotes mRNA decay by engagement of the nuclear exosome, and formation of heterochromatin islands at meiotic genes silenced by the exosome. Recruitment of the CCR4-NOT complex to target RNAs promotes heterochromatin formation at RNAi-dependent heterochromatin domains (HOODs), including a subset of meiotic genes, lncRNAs and retrotransposons. Recruitment of the CCR4-NOT complex to rDNA promotes rDNA heterochromatin assembly. Promotes non-canonical transcription termination at meiotic genes and prevents lncRNA transcription from invading and repressing adjacent genes. The sequence is that of RNA binding exosome specificity factor Mmi1 (mmi1) from Schizosaccharomyces pombe (strain 972 / ATCC 24843) (Fission yeast).